The following is a 236-amino-acid chain: Leucyl/phenylalanyl-tRNA--protein transferase (236 aa).

This sequence belongs to the L/F-transferase family.

It is found in the cytoplasm. It catalyses the reaction N-terminal L-lysyl-[protein] + L-leucyl-tRNA(Leu) = N-terminal L-leucyl-L-lysyl-[protein] + tRNA(Leu) + H(+). The enzyme catalyses N-terminal L-arginyl-[protein] + L-leucyl-tRNA(Leu) = N-terminal L-leucyl-L-arginyl-[protein] + tRNA(Leu) + H(+). The catalysed reaction is L-phenylalanyl-tRNA(Phe) + an N-terminal L-alpha-aminoacyl-[protein] = an N-terminal L-phenylalanyl-L-alpha-aminoacyl-[protein] + tRNA(Phe). In terms of biological role, functions in the N-end rule pathway of protein degradation where it conjugates Leu, Phe and, less efficiently, Met from aminoacyl-tRNAs to the N-termini of proteins containing an N-terminal arginine or lysine. The protein is Leucyl/phenylalanyl-tRNA--protein transferase of Vibrio atlanticus (strain LGP32) (Vibrio splendidus (strain Mel32)).